The following is a 189-amino-acid chain: Protein GrpE (189 aa).

Residues 1–38 show a composition bias toward basic and acidic residues; sequence MTKSNETERMEESEETHSSDIRSASESDHASGSDHTES. The disordered stretch occupies residues 1–54; the sequence is MTKSNETERMEESEETHSSDIRSASESDHASGSDHTESADEIPTADAEQGELEQ.

Belongs to the GrpE family. As to quaternary structure, homodimer.

The protein resides in the cytoplasm. Functionally, participates actively in the response to hyperosmotic and heat shock by preventing the aggregation of stress-denatured proteins, in association with DnaK and GrpE. It is the nucleotide exchange factor for DnaK and may function as a thermosensor. Unfolded proteins bind initially to DnaJ; upon interaction with the DnaJ-bound protein, DnaK hydrolyzes its bound ATP, resulting in the formation of a stable complex. GrpE releases ADP from DnaK; ATP binding to DnaK triggers the release of the substrate protein, thus completing the reaction cycle. Several rounds of ATP-dependent interactions between DnaJ, DnaK and GrpE are required for fully efficient folding. This is Protein GrpE from Tropheryma whipplei (strain TW08/27) (Whipple's bacillus).